The sequence spans 692 residues: Elongation factor G (692 aa).

One can recognise a tr-type G domain in the interval Glu8–Ser282. GTP-binding positions include Ala17–Thr24, Asp81–His85, and Asn135–Asp138.

It belongs to the TRAFAC class translation factor GTPase superfamily. Classic translation factor GTPase family. EF-G/EF-2 subfamily.

Its subcellular location is the cytoplasm. Functionally, catalyzes the GTP-dependent ribosomal translocation step during translation elongation. During this step, the ribosome changes from the pre-translocational (PRE) to the post-translocational (POST) state as the newly formed A-site-bound peptidyl-tRNA and P-site-bound deacylated tRNA move to the P and E sites, respectively. Catalyzes the coordinated movement of the two tRNA molecules, the mRNA and conformational changes in the ribosome. In Nostoc punctiforme (strain ATCC 29133 / PCC 73102), this protein is Elongation factor G.